Consider the following 582-residue polypeptide: MHNDKDLSTWQTFRRLWPTIAPFKAGLIVAGVALILNAASDTFMLSLLKPLLDDGFGKTDRSVLMWMPLVVIGLMILRGITSYISSYCISWVSGKVVMTMRRRLFGHMMGMPVSFFDKQSTGTLLSRITYDSEQVASSSSGALITVVREGASIIGLFIMMFYYSWQLSIILIVLAPIVSIAIRVVSKRFRNISKNMQNTMGQVTTSAEQMLKGHKEVLIFGGQEVETKRFDKVSNRMRLQGMKMVSASSISDPIIQLIASLALAFVLYAASFPSVMDSLTAGTITVVFSSMIALMRPLKSLTNVNAQFQRGMAACQTLFTILDSEQEKDEGKRVIERATGDVEFRNVTFTYPGRDVPALRNINLKIPAGKTVALVGRSGSGKSTIASLITRFYDIDEGEILMDGHDLREYTLASLRNQVALVSQNVHLFNDTVANNIAYARTEQYSREQIEEAARMAYAMDFINKMDNGLDTVIGENGVLLSGGQRQRIAIARALLRDSPILILDEATSALDTESERAIQAALDELQKNRTSLVIAHRLSTIEKADEIVVVEDGVIVERGTHNDLLEHRGVYAQLHKMQFGQ.

A run of 5 helical transmembrane segments spans residues 16 to 36 (LWPT…ALIL), 64 to 84 (LMWM…TSYI), 153 to 173 (IIGL…ILIV), 253 to 273 (PIIQ…ASFP), and 275 to 295 (VMDS…IALM). In terms of domain architecture, ABC transmembrane type-1 spans 28 to 310 (IVAGVALILN…LTNVNAQFQR (283 aa)). Residues 342–578 (VEFRNVTFTY…RGVYAQLHKM (237 aa)) enclose the ABC transporter domain. Residue 376–383 (GRSGSGKS) coordinates ATP.

It belongs to the ABC transporter superfamily. Lipid exporter (TC 3.A.1.106) family. In terms of assembly, homodimer.

Its subcellular location is the cell inner membrane. It catalyses the reaction ATP + H2O + lipid A-core oligosaccharideSide 1 = ADP + phosphate + lipid A-core oligosaccharideSide 2.. Involved in lipopolysaccharide (LPS) biosynthesis. Translocates lipid A-core from the inner to the outer leaflet of the inner membrane. Transmembrane domains (TMD) form a pore in the inner membrane and the ATP-binding domain (NBD) is responsible for energy generation. This Escherichia coli O6:K15:H31 (strain 536 / UPEC) protein is ATP-dependent lipid A-core flippase.